The sequence spans 84 residues: Large ribosomal subunit protein bL27 (84 aa).

Positions 1–22 are disordered; it reads MAKTKAGGSTKNGRDSAGRRLG.

The protein belongs to the bacterial ribosomal protein bL27 family.

The chain is Large ribosomal subunit protein bL27 from Mesomycoplasma hyopneumoniae (strain 232) (Mycoplasma hyopneumoniae).